The sequence spans 334 residues: 2,3-bisphosphoglycerate-dependent phosphoglycerate mutase 1 (334 aa).

The N-terminal 48 residues, 1-48 (MATATSHQSVVSFASLRSSPSSTISQCGFKIDSSLSFTSKKTNFCKIK), are a transit peptide targeting the chloroplast. Substrate is bound by residues 84 to 91 (RHGESLWN), 97 to 98 (TG), R134, 188 to 191 (ERMY), K199, 215 to 216 (RR), and 259 to 260 (GN). Catalysis depends on H85, which acts as the Tele-phosphohistidine intermediate. The active-site Proton donor/acceptor is E188.

This sequence belongs to the phosphoglycerate mutase family. BPG-dependent PGAM subfamily.

The protein resides in the plastid. It is found in the chloroplast. It carries out the reaction (2R)-2-phosphoglycerate = (2R)-3-phosphoglycerate. It participates in carbohydrate degradation; glycolysis; pyruvate from D-glyceraldehyde 3-phosphate: step 3/5. Catalyzes the interconversion of 2-phosphoglycerate and 3-phosphoglycerate. This is 2,3-bisphosphoglycerate-dependent phosphoglycerate mutase 1 from Arabidopsis thaliana (Mouse-ear cress).